We begin with the raw amino-acid sequence, 42 residues long: Photosystem I reaction center subunit IX (42 aa).

A helical membrane pass occupies residues 7 to 27 (YLSTAPVLAAIWFGILAGLLI).

This sequence belongs to the PsaJ family.

It is found in the plastid. It localises to the chloroplast thylakoid membrane. Functionally, may help in the organization of the PsaE and PsaF subunits. This chain is Photosystem I reaction center subunit IX, found in Staurastrum punctulatum (Green alga).